The following is a 96-amino-acid chain: Basic blue protein (96 aa).

One can recognise a Phytocyanin domain in the interval 1–96 (AVYVVGGSGG…SGMKIAVNAL (96 aa)). Residues histidine 39, cysteine 79, histidine 84, and methionine 89 each contribute to the Cu cation site. Cysteine 52 and cysteine 85 are oxidised to a cystine.

The chain is Basic blue protein from Cucumis sativus (Cucumber).